The primary structure comprises 692 residues: Protein adenylyltransferase SelO-1, mitochondrial (692 aa).

The transit peptide at 1-24 (MASVGSRLTRFYISRPGVIARRFL) directs the protein to the mitochondrion. 7 residues coordinate ATP: Gly142, Gly144, Lys176, Asp188, Gly189, Arg246, and Arg253. Catalysis depends on Asp337, which acts as the Proton acceptor. 2 residues coordinate Mg(2+): Asn338 and Asp347. Asp347 lines the ATP pocket. The tract at residues 637–676 (LEQPGWMGRGGAAIPGERDETEEEGSNSSGAGARGLVPYD) is disordered. Residue Sec690 is a non-standard amino acid, selenocysteine.

Belongs to the SELO family. It depends on Mg(2+) as a cofactor.

It localises to the mitochondrion. The enzyme catalyses L-tyrosyl-[protein] + ATP = O-(5'-adenylyl)-L-tyrosyl-[protein] + diphosphate. It catalyses the reaction L-threonyl-[protein] + ATP = 3-O-(5'-adenylyl)-L-threonyl-[protein] + diphosphate. The catalysed reaction is L-seryl-[protein] + ATP = 3-O-(5'-adenylyl)-L-seryl-[protein] + diphosphate. In terms of biological role, catalyzes the transfer of adenosine 5'-monophosphate (AMP) to Ser, Thr and Tyr residues of target proteins (AMPylation). May be a redox-active mitochondrial selenoprotein which interacts with a redox target protein. The protein is Protein adenylyltransferase SelO-1, mitochondrial of Danio rerio (Zebrafish).